Reading from the N-terminus, the 480-residue chain is Proline--tRNA ligase (480 aa).

It belongs to the class-II aminoacyl-tRNA synthetase family. ProS type 3 subfamily. In terms of assembly, homodimer.

It is found in the cytoplasm. The catalysed reaction is tRNA(Pro) + L-proline + ATP = L-prolyl-tRNA(Pro) + AMP + diphosphate. Catalyzes the attachment of proline to tRNA(Pro) in a two-step reaction: proline is first activated by ATP to form Pro-AMP and then transferred to the acceptor end of tRNA(Pro). This Roseiflexus castenholzii (strain DSM 13941 / HLO8) protein is Proline--tRNA ligase.